Here is a 208-residue protein sequence, read N- to C-terminus: Small ribosomal subunit protein uS4 (208 aa).

The S4 RNA-binding domain occupies 98 to 163; the sequence is TRLDNVVFRL…TPLFKEIVDG (66 aa).

The protein belongs to the universal ribosomal protein uS4 family. In terms of assembly, part of the 30S ribosomal subunit. Contacts protein S5. The interaction surface between S4 and S5 is involved in control of translational fidelity.

Its function is as follows. One of the primary rRNA binding proteins, it binds directly to 16S rRNA where it nucleates assembly of the body of the 30S subunit. Functionally, with S5 and S12 plays an important role in translational accuracy. This is Small ribosomal subunit protein uS4 from Heliobacterium modesticaldum (strain ATCC 51547 / Ice1).